Reading from the N-terminus, the 198-residue chain is Heat shock 70 kDa protein (198 aa).

The span at 170–191 shows a compositional bias: gly residues; that stretch reads GGGVPSGMPGGMPGAGGGGGKG. The disordered stretch occupies residues 170–198; sequence GGGVPSGMPGGMPGAGGGGGKGPTIEEVD.

The protein belongs to the heat shock protein 70 family.

In Schistosoma japonicum (Blood fluke), this protein is Heat shock 70 kDa protein.